Here is a 417-residue protein sequence, read N- to C-terminus: Odorant receptor Or1 (417 aa).

The Cytoplasmic portion of the chain corresponds to 1–2; it reads MK. Residues 3-23 form a helical membrane-spanning segment; that stretch reads LNKLNPRWDAYDRRDSFWLQL. Topologically, residues 24–45 are extracellular; that stretch reads LCLKYLGLWPPEDTDQATRNRY. Residues 46-66 form a helical membrane-spanning segment; sequence IAYGWALRIMFLHLYALTQAL. At 67–73 the chain is on the cytoplasmic side; sequence YFKDVKD. Residues 74–94 form a helical membrane-spanning segment; it reads INDIANALFVLMTQVTLIYKL. Residues 95–133 lie on the Extracellular side of the membrane; that stretch reads EKFNYNIARIQACLRKLNCTLYHPKQREEFSPVLQSMSG. The N-linked (GlcNAc...) asparagine glycan is linked to Asn112. The chain crosses the membrane as a helical span at residues 134–154; sequence VFWLMIFLMFVAIFTIIMWVM. The Cytoplasmic portion of the chain corresponds to 155–178; the sequence is SPAFDNERRLPVPAWFPVDYHHSD. A helical membrane pass occupies residues 179–199; sequence IVYGVLFLYQTIGIVMSATYN. Topologically, residues 200 to 284 are extracellular; the sequence is FSTDTMFSGL…ILSFGDEVQD (85 aa). Residues 285–305 traverse the membrane as a helical segment; sequence IFQGSIFAQVCASVIIICMTL. Residues 306 to 317 lie on the Cytoplasmic side of the membrane; the sequence is LQATGDDVTMAD. Residues 318 to 338 form a helical membrane-spanning segment; that stretch reads LLGCGFYLLVMTSQVFIFCYV. Residues 339–417 are Extracellular-facing; it reads GNEISYTTDK…LAVLQSMESE (79 aa).

Belongs to the insect chemoreceptor superfamily. Heteromeric odorant receptor channel (TC 1.A.69) family. Or2a subfamily. In terms of tissue distribution, female-specific antennae and maxillary palp expression.

It is found in the cell membrane. Odorant receptor which plays a critical role in the anthropophilic host-seeking behavior; establishes the host preference to transmit malaria. May participate in the phenomenon of decreased host-seeking behavior in disease vector mosquitoes after blood feeding. This Anopheles gambiae (African malaria mosquito) protein is Odorant receptor Or1 (OR1).